The chain runs to 461 residues: Porin AaxA (461 aa).

The N-terminal stretch at 1–22 (MSFRSVLLTALLSLSFTTTMQA) is a signal peptide.

It belongs to the OprB family.

The protein resides in the cell outer membrane. In terms of biological role, facilitates L-arginine uptake, as part of the AaxABC system. The arginine uptake by the bacterium in the macrophage may be a virulence factor against the host innate immune response. In Chlamydia trachomatis serovar A (strain ATCC VR-571B / DSM 19440 / HAR-13), this protein is Porin AaxA (aaxA).